Reading from the N-terminus, the 407-residue chain is Phosphopentomutase (407 aa).

Mn(2+) is bound by residues Asp10, Asp306, His311, Asp347, His348, and His359.

The protein belongs to the phosphopentomutase family. The cofactor is Mn(2+).

The protein localises to the cytoplasm. The enzyme catalyses 2-deoxy-alpha-D-ribose 1-phosphate = 2-deoxy-D-ribose 5-phosphate. It catalyses the reaction alpha-D-ribose 1-phosphate = D-ribose 5-phosphate. The protein operates within carbohydrate degradation; 2-deoxy-D-ribose 1-phosphate degradation; D-glyceraldehyde 3-phosphate and acetaldehyde from 2-deoxy-alpha-D-ribose 1-phosphate: step 1/2. Functionally, isomerase that catalyzes the conversion of deoxy-ribose 1-phosphate (dRib-1-P) and ribose 1-phosphate (Rib-1-P) to deoxy-ribose 5-phosphate (dRib-5-P) and ribose 5-phosphate (Rib-5-P), respectively. The polypeptide is Phosphopentomutase (Buchnera aphidicola subsp. Acyrthosiphon pisum (strain Tuc7)).